Reading from the N-terminus, the 627-residue chain is (R)-linalool synthase 1, chloroplastic (627 aa).

Residues 1 to 21 (MAFVSIAPLASRCCVHKSFVS) constitute a chloroplast transit peptide. D378, D382, and E530 together coordinate Mg(2+). The DDXXD motif signature appears at 378–382 (DDIYD).

Belongs to the terpene synthase family. Tpsd subfamily. It depends on Mg(2+) as a cofactor. Mn(2+) serves as cofactor.

The protein localises to the plastid. The protein resides in the chloroplast. The catalysed reaction is (2E)-geranyl diphosphate + H2O = (R)-linalool + diphosphate. It functions in the pathway terpene metabolism; oleoresin biosynthesis. Functionally, terpene synthase (TPS) involved in the biosynthesis of monoterpene natural products included in conifer oleoresin secretions and volatile emissions; these compounds contribute to biotic and abiotic stress defense against herbivores and pathogens. Catalyzes the conversion of (2E)-geranyl diphosphate (GPP) to (R)-linalool. This is (R)-linalool synthase 1, chloroplastic from Picea sitchensis (Sitka spruce).